Reading from the N-terminus, the 145-residue chain is 6-pyruvoyl tetrahydrobiopterin synthase (145 aa).

S19 carries the post-translational modification Phosphoserine; by PKG. H24 contributes to the Zn(2+) binding site. Position 28 is a phosphoserine (S28). The Proton acceptor role is filled by C43. Positions 49 and 51 each coordinate Zn(2+). Catalysis depends on H90, which acts as the Charge relay system. The residue at position 128 (Y128) is a Phosphotyrosine. E134 acts as the Charge relay system in catalysis.

This sequence belongs to the PTPS family. Homohexamer formed of two homotrimers in a head to head fashion. It depends on Zn(2+) as a cofactor. Phosphorylation of Ser-19 is required for maximal enzyme activity.

It carries out the reaction 7,8-dihydroneopterin 3'-triphosphate = 6-pyruvoyl-5,6,7,8-tetrahydropterin + triphosphate + H(+). It participates in cofactor biosynthesis; tetrahydrobiopterin biosynthesis; tetrahydrobiopterin from 7,8-dihydroneopterin triphosphate: step 1/3. Functionally, involved in the biosynthesis of tetrahydrobiopterin, an essential cofactor of aromatic amino acid hydroxylases. Catalyzes the transformation of 7,8-dihydroneopterin triphosphate into 6-pyruvoyl tetrahydropterin. The chain is 6-pyruvoyl tetrahydrobiopterin synthase (PTS) from Homo sapiens (Human).